Consider the following 243-residue polypeptide: MIIIPARLKSSRFENKVLEDIFGLPMVVRCAKNANLVDECVVACDDESIMQTCQKFHIKAVLTSKHHNSGTERCLEAARILGLKNDERVLNLQGDEPFLEKEVILALLEATKNAPFMATCAKVIDEEQAKSPNLVKVVLDSQNNALYFSRSLIPFLRDFDAKRQTPLLGHIGIYGFHNKEILEELCTLKPCVLEDTEKLEQLRALYYQKKIAVKIVQSQSVGIDTQEDLENALKIFSPNLLER.

Belongs to the KdsB family.

It is found in the cytoplasm. The enzyme catalyses 3-deoxy-alpha-D-manno-oct-2-ulosonate + CTP = CMP-3-deoxy-beta-D-manno-octulosonate + diphosphate. It functions in the pathway nucleotide-sugar biosynthesis; CMP-3-deoxy-D-manno-octulosonate biosynthesis; CMP-3-deoxy-D-manno-octulosonate from 3-deoxy-D-manno-octulosonate and CTP: step 1/1. Its pathway is bacterial outer membrane biogenesis; lipopolysaccharide biosynthesis. Its function is as follows. Activates KDO (a required 8-carbon sugar) for incorporation into bacterial lipopolysaccharide in Gram-negative bacteria. This Helicobacter pylori (strain HPAG1) protein is 3-deoxy-manno-octulosonate cytidylyltransferase.